We begin with the raw amino-acid sequence, 453 residues long: tRNA modification GTPase MnmE (453 aa).

(6S)-5-formyl-5,6,7,8-tetrahydrofolate-binding residues include R22, E79, and K119. The TrmE-type G domain maps to 215–376 (GMKVVIAGRP…LKQHLKSLMG (162 aa)). K(+) is bound at residue N225. GTP-binding positions include 225–230 (NAGKSS), 244–250 (TEIAGTT), 269–272 (DTAG), and 334–337 (NKAD). S229 contacts Mg(2+). Residues T244, I246, and T249 each coordinate K(+). T250 lines the Mg(2+) pocket. K453 is a (6S)-5-formyl-5,6,7,8-tetrahydrofolate binding site.

This sequence belongs to the TRAFAC class TrmE-Era-EngA-EngB-Septin-like GTPase superfamily. TrmE GTPase family. In terms of assembly, homodimer. Heterotetramer of two MnmE and two MnmG subunits. K(+) serves as cofactor.

Its subcellular location is the cytoplasm. Its function is as follows. Exhibits a very high intrinsic GTPase hydrolysis rate. Involved in the addition of a carboxymethylaminomethyl (cmnm) group at the wobble position (U34) of certain tRNAs, forming tRNA-cmnm(5)s(2)U34. In Shewanella baltica (strain OS155 / ATCC BAA-1091), this protein is tRNA modification GTPase MnmE.